We begin with the raw amino-acid sequence, 380 residues long: Chaperone protein DnaJ 2 (380 aa).

A J domain is found at 10–75 (DYYKILGVSK…KKRKEYDQAR (66 aa)). Positions 32 to 56 (KIARDNHPDSHPGDKAAEARFKEAS) are enriched in basic and acidic residues. The tract at residues 32 to 63 (KIARDNHPDSHPGDKAAEARFKEASEANDVLS) is disordered. The CR-type zinc-finger motif lies at 151–230 (GTTVTMDMVS…CHGSGRAKST (80 aa)). Residues C164, C167, C181, C184, C204, C207, C218, and C221 each coordinate Zn(2+). CXXCXGXG motif repeat units follow at residues 164–171 (CQACRGTG), 181–188 (CSTCQGSG), 204–211 (CPDCHGRG), and 218–225 (CQVCHGSG).

This sequence belongs to the DnaJ family. Homodimer. Requires Zn(2+) as cofactor.

It localises to the cytoplasm. Functionally, participates actively in the response to hyperosmotic and heat shock by preventing the aggregation of stress-denatured proteins and by disaggregating proteins, also in an autonomous, DnaK-independent fashion. Unfolded proteins bind initially to DnaJ; upon interaction with the DnaJ-bound protein, DnaK hydrolyzes its bound ATP, resulting in the formation of a stable complex. GrpE releases ADP from DnaK; ATP binding to DnaK triggers the release of the substrate protein, thus completing the reaction cycle. Several rounds of ATP-dependent interactions between DnaJ, DnaK and GrpE are required for fully efficient folding. Also involved, together with DnaK and GrpE, in the DNA replication of plasmids through activation of initiation proteins. The polypeptide is Chaperone protein DnaJ 2 (Cutibacterium acnes (strain DSM 16379 / KPA171202) (Propionibacterium acnes)).